The following is a 198-amino-acid chain: Recombination protein RecR (198 aa).

The C4-type zinc finger occupies 57-72 (CTICGHITDTDPCYIC). In terms of domain architecture, Toprim spans 80-175 (TTICVVQDPK…KVTRIAHGLP (96 aa)).

Belongs to the RecR family.

In terms of biological role, may play a role in DNA repair. It seems to be involved in an RecBC-independent recombinational process of DNA repair. It may act with RecF and RecO. In Geobacillus kaustophilus (strain HTA426), this protein is Recombination protein RecR.